The sequence spans 690 residues: Calpain-9 (690 aa).

The interval 1–23 is disordered; the sequence is MPYLHRSLRPQPQPVPGDARTIH. The Calpain catalytic domain maps to 42-337; that stretch reads LFEDADFPAS…FDKVEICNLT (296 aa). Residues Leu81, Gly83, and Asp88 each contribute to the Ca(2+) site. The active site involves Cys97. A Ca(2+)-binding site is contributed by Glu167. Catalysis depends on residues His254 and Asn278. Ca(2+) is bound by residues Glu284, Asp291, Leu312, Asp314, and Glu316. The interval 338-521 is domain III; the sequence is PDALEDSALH…PQEEETEEEQ (184 aa). EF-hand domains are found at residues 518-552, 561-589, and 591-626; these read EEEQ…VLQK, LSLL…FRVF, and DKLK…AGFQ. The domain IV stretch occupies residues 522-690; sequence QFRALFQRVA…NEFISLTMNI (169 aa). Asp574, Ser576, Asn578, Lys580, Glu585, Asp604, Asp606, Ser608, Thr610, and Glu615 together coordinate Ca(2+).

This sequence belongs to the peptidase C2 family. In terms of tissue distribution, predominantly expressed in stomach and small intestine, although low levels of expression in other organs.

The protein resides in the cytoplasm. In terms of biological role, calcium-regulated non-lysosomal thiol-protease. This is Calpain-9 (Capn9) from Mus musculus (Mouse).